A 1070-amino-acid polypeptide reads, in one-letter code: DNA-directed RNA polymerase subunit beta (1070 aa).

Belongs to the RNA polymerase beta chain family. In plastids the minimal PEP RNA polymerase catalytic core is composed of four subunits: alpha, beta, beta', and beta''. When a (nuclear-encoded) sigma factor is associated with the core the holoenzyme is formed, which can initiate transcription.

Its subcellular location is the plastid. The protein localises to the chloroplast. It catalyses the reaction RNA(n) + a ribonucleoside 5'-triphosphate = RNA(n+1) + diphosphate. In terms of biological role, DNA-dependent RNA polymerase catalyzes the transcription of DNA into RNA using the four ribonucleoside triphosphates as substrates. This chain is DNA-directed RNA polymerase subunit beta, found in Illicium oligandrum (Star anise).